The following is a 682-amino-acid chain: TPR repeat-containing thioredoxin TTL4 (682 aa).

Disordered stretches follow at residues M1–L120 and N132–I157. S8 carries the post-translational modification Phosphoserine. The segment covering K16 to D39 has biased composition (basic and acidic residues). Residue S42 is modified to Phosphoserine. Residues G48 to G71 are compositionally biased toward low complexity. TPR repeat units follow at residues S211 to N244, A246 to Y278, R280 to A312, A402 to N435, V449 to N482, S483 to Y516, and K518 to D550. Residues D587–E674 enclose the Thioredoxin domain.

In terms of tissue distribution, widely expressed.

In terms of biological role, involved in osmotic and salt stress tolerance. May play a role in the control of meristematic cell size during osmotic stress. In Arabidopsis thaliana (Mouse-ear cress), this protein is TPR repeat-containing thioredoxin TTL4 (TTL4).